The chain runs to 190 residues: NADH-quinone oxidoreductase subunit B (190 aa).

Residues Cys-69, Cys-70, Cys-134, and Cys-164 each coordinate [4Fe-4S] cluster.

The protein belongs to the complex I 20 kDa subunit family. As to quaternary structure, NDH-1 is composed of 14 different subunits. Subunits NuoB, C, D, E, F, and G constitute the peripheral sector of the complex. It depends on [4Fe-4S] cluster as a cofactor.

Its subcellular location is the cell inner membrane. It catalyses the reaction a quinone + NADH + 5 H(+)(in) = a quinol + NAD(+) + 4 H(+)(out). Its function is as follows. NDH-1 shuttles electrons from NADH, via FMN and iron-sulfur (Fe-S) centers, to quinones in the respiratory chain. Couples the redox reaction to proton translocation (for every two electrons transferred, four hydrogen ions are translocated across the cytoplasmic membrane), and thus conserves the redox energy in a proton gradient. The sequence is that of NADH-quinone oxidoreductase subunit B from Hyphomonas neptunium (strain ATCC 15444).